The sequence spans 338 residues: ABC transporter I family member 6, chloroplastic (338 aa).

The transit peptide at 1–66 directs the protein to the chloroplast; that stretch reads MAGVNLQLRH…RTTRRSVIVS (66 aa). The ABC transporter domain occupies 92 to 338; that stretch reads LEVRDLRAVI…EKEGYKAISG (247 aa). Residue 126 to 133 participates in ATP binding; the sequence is GKNGSGKS.

This sequence belongs to the ABC transporter superfamily. ABCI family. Interacts with NAP6. In terms of tissue distribution, present in all organs, with higher levels in aerial parts.

It is found in the plastid. Its subcellular location is the chloroplast. Its function is as follows. Essential protein. Required during embryo development, especially at early stages. Involved in chloroplast differentiation. The protein is ABC transporter I family member 6, chloroplastic (ABCI6) of Arabidopsis thaliana (Mouse-ear cress).